The sequence spans 239 residues: Ribonuclease 3 (239 aa).

The region spanning 18–141 is the RNase III domain; it reads YTTLEKALGY…LMAGVYLEAG (124 aa). Glu-54 is a binding site for Mg(2+). The active site involves Asp-58. The Mg(2+) site is built by Ser-127 and Glu-130. Glu-130 is an active-site residue. Positions 168 to 237 constitute a DRBM domain; that stretch reads DYKTALQELT…AYQALQKLKE (70 aa).

Belongs to the ribonuclease III family. In terms of assembly, homodimer. Mg(2+) is required as a cofactor.

The protein localises to the cytoplasm. It carries out the reaction Endonucleolytic cleavage to 5'-phosphomonoester.. Digests double-stranded RNA. Involved in the processing of primary rRNA transcript to yield the immediate precursors to the large and small rRNAs (23S and 16S). Processes some mRNAs, and tRNAs when they are encoded in the rRNA operon. Processes pre-crRNA and tracrRNA of type II CRISPR loci if present in the organism. The protein is Ribonuclease 3 of Helicobacter pylori (strain ATCC 700392 / 26695) (Campylobacter pylori).